The primary structure comprises 257 residues: Indole-3-glycerol phosphate synthase (257 aa).

It belongs to the TrpC family.

The enzyme catalyses 1-(2-carboxyphenylamino)-1-deoxy-D-ribulose 5-phosphate + H(+) = (1S,2R)-1-C-(indol-3-yl)glycerol 3-phosphate + CO2 + H2O. The protein operates within amino-acid biosynthesis; L-tryptophan biosynthesis; L-tryptophan from chorismate: step 4/5. This Halalkalibacterium halodurans (strain ATCC BAA-125 / DSM 18197 / FERM 7344 / JCM 9153 / C-125) (Bacillus halodurans) protein is Indole-3-glycerol phosphate synthase.